The chain runs to 302 residues: Urease accessory protein UreD 2 (302 aa).

The protein belongs to the UreD family. As to quaternary structure, ureD, UreF and UreG form a complex that acts as a GTP-hydrolysis-dependent molecular chaperone, activating the urease apoprotein by helping to assemble the nickel containing metallocenter of UreC. The UreE protein probably delivers the nickel.

Its subcellular location is the cytoplasm. In terms of biological role, required for maturation of urease via the functional incorporation of the urease nickel metallocenter. This chain is Urease accessory protein UreD 2, found in Brucella melitensis biotype 1 (strain ATCC 23456 / CCUG 17765 / NCTC 10094 / 16M).